We begin with the raw amino-acid sequence, 125 residues long: Protein Bouncer (125 aa).

A signal peptide spans Met-1–Pro-18. 5 disulfide bridges follow: Cys-23/Cys-48, Cys-26/Cys-35, Cys-42/Cys-66, Cys-72/Cys-91, and Cys-92/Cys-97. Residues Cys-23–Asn-98 form the UPAR/Ly6 domain. N-linked (GlcNAc...) asparagine glycosylation is present at Asn-32. Asn-84 carries N-linked (GlcNAc...) asparagine glycosylation. Asn-98 is lipidated: GPI-anchor amidated asparagine. Residues Ser-99–Leu-125 constitute a propeptide, removed in mature form.

This sequence belongs to the SPACA4/bouncer family. Interacts with spermatocyte complex composed of izumo1, spaca6 and tmem81. N-glycosylated. In terms of tissue distribution, highly expressed in oocytes. Not expressed in testis.

It is found in the cell membrane. In terms of biological role, oocyte-expressed fertilization factor that mediates sperm-egg binding and is essential for sperm entry into the egg. Necessary and sufficient to mediate species-specific gamete recognition and fertilization, which is essential for vertebrate species performing external fertilization. External fertilization cannot guarantee that only conspecific sperm reaches the egg by precopulatory mate choice: proteins such as Bouncer can therefore support the selection of conspecific sperm. The protein is Protein Bouncer of Danio rerio (Zebrafish).